A 229-amino-acid chain; its full sequence is Large ribosomal subunit protein uL1 (229 aa).

It belongs to the universal ribosomal protein uL1 family. Part of the 50S ribosomal subunit.

In terms of biological role, binds directly to 23S rRNA. The L1 stalk is quite mobile in the ribosome, and is involved in E site tRNA release. Protein L1 is also a translational repressor protein, it controls the translation of the L11 operon by binding to its mRNA. The polypeptide is Large ribosomal subunit protein uL1 (Lactococcus lactis subsp. lactis (strain IL1403) (Streptococcus lactis)).